Reading from the N-terminus, the 733-residue chain is MTKASVVDQSAPAYAPKRLLAEARAASKVNIEQVFAFLEGSPEKAALTNELLAEFAADPAITQGPEYYDLTKAEQREQTVKKIARLALYLENDIKLARKQHHKDVVRDLQSPDAPMVTMSDMERFEKRSTLVALIDPQLATRLGVNLSLFGNAVRGNGTDEQIKYWLQERGLIFVKGIYGCFAMTELGHGSNVANLQTRATYDPASDSFVIQTPDLVATKWWIGGAAHSATHSTVYARLIVEGKDYGVKVFVVPLRNPKTMELLAGISIGDIGSKMGRDGIDNGWIQFNNVRIPREYMLSRFTKVIPGNPPKVEMEPLLDSISGYAALLSGRVSMVLDSYRFGARFSTIATRYAFGRQQFGDPTNETQLIEYPLHQFRVLPQLAIIYMMAPGAMKLMDTYNSCLGELYGAGDDKKKLTTVSARMKDLFVESASLKATCTWLTSTLIDELRQTCGGHGYSSYNGFGKAYNDWVVQCTWEGDNNVLCLTSGKSLLKKFAGIVRGKKVTICDTSMDYLRMDYIQKVVMGGTKKVSNLSTLPDYYQIWSVILVKYLKRCAETVRDNNDPESVSKLLVSIAKFHAFYSMLQEFHRKLASDQSHVGDAATKEVLWKVYKLSSLYFIDKFSGEFQQLKVMSPDQMTNVQEQMLAILPEIKTHAIRLTDAFHLPDAVINSSIGNYDGDIYHNYFNDVTRVAAKDKAPGVPPYADMLVNFLARGDQFDNLNISETSFKNLGK.

This sequence belongs to the acyl-CoA oxidase family. FAD is required as a cofactor.

The protein localises to the peroxisome. The catalysed reaction is a 2,3-saturated acyl-CoA + O2 = a (2E)-enoyl-CoA + H2O2. It functions in the pathway lipid metabolism; peroxisomal fatty acid beta-oxidation. The protein is Acyl-coenzyme A oxidase (POX1) of Eremothecium gossypii (strain ATCC 10895 / CBS 109.51 / FGSC 9923 / NRRL Y-1056) (Yeast).